Consider the following 106-residue polypeptide: NADH dehydrogenase [ubiquinone] 1 alpha subcomplex subunit 8-B (106 aa).

N-acetylserine is present on Ser-2. 2 CHCH domains span residues 26–67 (GMRC…LKDL) and 68–106 (HQKC…CPLK). 3 consecutive short sequence motifs (cx9C motif) follow at residues 29-39 (CMPENVAFLKC), 49-59 (CLDKGRDVTRC), and 71-81 (CQKEMDDYVGC). Cystine bridges form between Cys-29-Cys-59, Cys-39-Cys-49, Cys-71-Cys-103, and Cys-81-Cys-92. The short motif at 92–103 (CRKEQEAFEKVC) is the Cx10C motif element.

Belongs to the complex I NDUFA8 subunit family. Complex I is composed of at least 49 different subunits.

The protein localises to the mitochondrion. It localises to the mitochondrion intermembrane space. Accessory subunit of the mitochondrial membrane respiratory chain NADH dehydrogenase (Complex I), that is believed not to be involved in catalysis. Complex I functions in the transfer of electrons from NADH to the respiratory chain. The immediate electron acceptor for the enzyme is believed to be ubiquinone. The protein is NADH dehydrogenase [ubiquinone] 1 alpha subcomplex subunit 8-B of Arabidopsis thaliana (Mouse-ear cress).